A 246-amino-acid polypeptide reads, in one-letter code: Electron transfer flavoprotein beta subunit lysine methyltransferase (246 aa).

Belongs to the methyltransferase superfamily. ETFBKMT family.

The protein localises to the cytoplasm. It localises to the mitochondrion matrix. The enzyme catalyses L-lysyl-[protein] + 3 S-adenosyl-L-methionine = N(6),N(6),N(6)-trimethyl-L-lysyl-[protein] + 3 S-adenosyl-L-homocysteine + 3 H(+). In terms of biological role, protein-lysine methyltransferase that selectively trimethylates the flavoprotein ETFB in mitochondria. Thereby, may negatively regulate the function of ETFB in electron transfer from Acyl-CoA dehydrogenases to the main respiratory chain. This is Electron transfer flavoprotein beta subunit lysine methyltransferase (etfbkmt) from Xenopus laevis (African clawed frog).